The following is a 199-amino-acid chain: Female-specific protein transformer (199 aa).

Disordered stretches follow at residues 1-121 (MDAD…RTPR) and 178-199 (YRAG…QAPN). The segment covering 20-37 (REKMPYFADEVRERDRVR) has biased composition (basic and acidic residues). Composition is skewed to basic residues over residues 56 to 69 (RRSR…RSRT), 77 to 92 (CQRR…RSGS), and 102 to 119 (SRRR…RSRT).

The protein resides in the nucleus speckle. Functionally, member of the regulatory pathway controlling female somatic sexual differentiation, regulated by Sxl. Activates dsx female-specific splicing by promoting the formation of a splicing enhancer complex which consists of tra, tra2 and sr proteins. In Drosophila virilis (Fruit fly), this protein is Female-specific protein transformer (tra).